Reading from the N-terminus, the 541-residue chain is Putative transferase YhbX (541 aa).

At 1-60 the chain is on the periplasmic side; the sequence is MTVFNKFARSFKSHWLLYLSVIVFGITNLVASSGAHMVQRLLFFVLTILVVKRISSLPLR. A helical membrane pass occupies residues 61 to 81; that stretch reads LLVAAPFVLLTAADMSISLYS. Topologically, residues 82–110 are cytoplasmic; that stretch reads WCTFGTTFNDGFAISVLQSDPDEVAKMLG. A helical transmembrane segment spans residues 111–131; the sequence is MYSPYLCAFAFLSLLFLAVII. Topologically, residues 132-141 are periplasmic; that stretch reads KYDVSLPTKK. Residues 142 to 162 form a helical membrane-spanning segment; that stretch reads VTGILLLIVISGSLFSACQFA. The Cytoplasmic segment spans residues 163–264; it reads YKDAKNKNAF…RKQIKLFNQA (102 aa). A helical membrane pass occupies residues 265–285; that stretch reads ISGAPYTALSVPLSLTADSVL. The Periplasmic portion of the chain corresponds to 286 to 541; sequence SHDIHNYPDN…QGNPTPEGQG (256 aa).

Belongs to the phosphoethanolamine transferase family.

It localises to the cell inner membrane. In terms of biological role, there are several lipid A forms in this strain, including a phosphoethanolamine (1-O-P-pEtN) form; overexpression of this gene does not lead to higher levels of the 1-O-P-pEtN form of lipid A. In Escherichia coli O157:H7, this protein is Putative transferase YhbX (yhbX).